Consider the following 341-residue polypeptide: NADH-quinone oxidoreductase subunit H (341 aa).

The next 8 membrane-spanning stretches (helical) occupy residues 16-36 (LLII…AVAY), 86-106 (VVFV…WAVI), 119-139 (VGVL…IMAG), 165-185 (IGFI…SDVV), 191-211 (MWFI…GLAE), 254-274 (GAMT…LGWL), 276-296 (IPGL…FLWV), and 315-335 (VFLP…TAFG).

This sequence belongs to the complex I subunit 1 family. In terms of assembly, NDH-1 is composed of 14 different subunits. Subunits NuoA, H, J, K, L, M, N constitute the membrane sector of the complex.

It is found in the cell inner membrane. It carries out the reaction a quinone + NADH + 5 H(+)(in) = a quinol + NAD(+) + 4 H(+)(out). Functionally, NDH-1 shuttles electrons from NADH, via FMN and iron-sulfur (Fe-S) centers, to quinones in the respiratory chain. The immediate electron acceptor for the enzyme in this species is believed to be ubiquinone. Couples the redox reaction to proton translocation (for every two electrons transferred, four hydrogen ions are translocated across the cytoplasmic membrane), and thus conserves the redox energy in a proton gradient. This subunit may bind ubiquinone. This is NADH-quinone oxidoreductase subunit H from Paramagnetospirillum magneticum (strain ATCC 700264 / AMB-1) (Magnetospirillum magneticum).